The following is a 297-amino-acid chain: Ribonuclease HIII (297 aa).

One can recognise an RNase H type-2 domain in the interval 81–297 (IPIIGTDEVG…NTKKAQALLK (217 aa)). Residues aspartate 87, glutamate 88, and aspartate 192 each contribute to the a divalent metal cation site.

The protein belongs to the RNase HII family. RnhC subfamily. Requires Mn(2+) as cofactor. It depends on Mg(2+) as a cofactor.

It localises to the cytoplasm. The catalysed reaction is Endonucleolytic cleavage to 5'-phosphomonoester.. In terms of biological role, endonuclease that specifically degrades the RNA of RNA-DNA hybrids. The protein is Ribonuclease HIII of Streptococcus agalactiae serotype Ia (strain ATCC 27591 / A909 / CDC SS700).